Reading from the N-terminus, the 989-residue chain is R3H domain-containing protein 2 (989 aa).

Disordered stretches follow at residues 23–71 and 106–147; these read EESV…AKSN and SCPS…QEYT. Over residues 36-56 the composition is skewed to basic and acidic residues; the sequence is PSKEEIEKESEDTSLRQETQR. Serine 37 is subject to Phosphoserine. Positions 58–71 are enriched in basic residues; sequence TSNHGHARKRAKSN. Positions 109–143 are enriched in basic and acidic residues; that stretch reads SDKEEEKSTKDVSEKEDKDKNKEKVPRRMLSRDSS. Serine 143 carries the phosphoserine modification. In terms of domain architecture, R3H spans 169–232; sequence RMMLLKLEQE…AVIINKTSNT (64 aa). Residues 233–303 form the SUZ domain; the sequence is RIPEQRFSEH…VRERIFARET (71 aa). Disordered stretches follow at residues 267–288, 306–390, 416–479, 493–524, 674–738, 751–793, and 848–867; these read DDNQIRVPLQDGRRSKSIEERE, NGYL…ISRP, TAQQ…FQPP, ASTGQPLPTSNYSTSSHAPPTQQVLPPQGYMQ, GTSP…PSMV, RGQK…SLSN, and QGQSGLKHGNRSKRQALKSA. A compositionally biased stretch (basic and acidic residues) spans 277–288; the sequence is DGRRSKSIEERE. Residues 320-331 are compositionally biased toward low complexity; the sequence is SRTSSSRQSSTD. Residues serine 344, serine 347, and serine 363 each carry the phosphoserine modification. A compositionally biased stretch (low complexity) spans 416–428; it reads TAQQQQQQQQQLP. Composition is skewed to polar residues over residues 454–466 and 493–517; these read PFGQMSLSRQGST and ASTGQPLPTSNYSTSSHAPPTQQVL. Positions 695-704 are enriched in pro residues; that stretch reads SPSPCSPPQM. Residues 705-727 show a composition bias toward low complexity; that stretch reads PQQYSGVSPSGPGVVVMQLNVPN. The span at 761 to 771 shows a compositional bias: polar residues; the sequence is PESSPQANTQM. The span at 772 to 790 shows a compositional bias: low complexity; it reads SSSPVTSPTQSPAPSPVTS. Phosphoserine is present on residues serine 866 and serine 868. A phosphothreonine mark is found at threonine 869 and threonine 873.

The protein localises to the nucleus. The polypeptide is R3H domain-containing protein 2 (R3HDM2) (Bos taurus (Bovine)).